Consider the following 102-residue polypeptide: Small ribosomal subunit protein uS10 (102 aa).

It belongs to the universal ribosomal protein uS10 family. Part of the 30S ribosomal subunit.

Its function is as follows. Involved in the binding of tRNA to the ribosomes. In Xanthobacter autotrophicus (strain ATCC BAA-1158 / Py2), this protein is Small ribosomal subunit protein uS10.